A 681-amino-acid chain; its full sequence is Potassium-transporting ATPase ATP-binding subunit (681 aa).

The next 4 helical transmembrane spans lie at 30-50 (LLVYVGAILATSLYFLGFFGI), 59-79 (LAIALILWFTVLFANFAEAIA), 216-236 (ILLVTLSIIFLAVSATLLPFT), and 255-275 (IALLVCLAPTTIGALLSSIGI). The 4-aspartylphosphate intermediate role is filled by Asp-306. ATP-binding positions include Asp-343, Glu-347, 376–383 (FTATTRMS), and Lys-394. Asp-517 and Asp-521 together coordinate Mg(2+). A run of 3 helical transmembrane segments spans residues 587 to 607 (FAIIPVLFYGIFPQLEALNLM), 615 to 635 (AILSAIIYNAVIIIVLIPLSL), and 661 to 681 (LIAPFIAIKLIDMLLTVLGIV).

This sequence belongs to the cation transport ATPase (P-type) (TC 3.A.3) family. Type IA subfamily. In terms of assembly, the system is composed of three essential subunits: KdpA, KdpB and KdpC.

The protein resides in the cell membrane. It carries out the reaction K(+)(out) + ATP + H2O = K(+)(in) + ADP + phosphate + H(+). Part of the high-affinity ATP-driven potassium transport (or Kdp) system, which catalyzes the hydrolysis of ATP coupled with the electrogenic transport of potassium into the cytoplasm. This subunit is responsible for energy coupling to the transport system and for the release of the potassium ions to the cytoplasm. This Listeria monocytogenes serovar 1/2a (strain ATCC BAA-679 / EGD-e) protein is Potassium-transporting ATPase ATP-binding subunit.